We begin with the raw amino-acid sequence, 920 residues long: WD repeat-containing protein 47 (920 aa).

The LisH domain occupies 10–42 (KEVEIIKLILDFLNSKKLHISMLALEKESGVIN). The 58-residue stretch at 45–102 (FSDDMLFLRQLILDGQWDEVLQFIQPLECMEKFDKKRFRYIILKQKFLEALCVNNAMS) folds into the CTLH domain. At Thr285 the chain carries Phosphothreonine. A phosphoserine mark is found at Ser289, Ser292, Ser297, and Ser312. Over residues 371 to 380 (YEESPERSDT) the composition is skewed to basic and acidic residues. The segment at 371–422 (YEESPERSDTPVEAQQPVSSEAMCQGSGLEKEPANGAQNPVPAKQEKNELRD) is disordered. Residue Ser423 is modified to Phosphoserine. The disordered stretch occupies residues 501-594 (LNQQCSGSKN…RSKGEEDDKS (94 aa)). A compositionally biased stretch (low complexity) spans 506–523 (SGSKNNGSNNSSVTSFST). The segment covering 538-552 (NIHTSTPRNPGSTNH) has biased composition (polar residues). Thr543 bears the Phosphothreonine mark. 7 WD repeats span residues 605–644 (EDTQ…DASA), 660–699 (HHKG…CNAT), 707–749 (MHDG…GQGL), 754–792 (GHTG…CVRV), 799–838 (GTGS…MVQS), 841–880 (PHSS…TKQL), and 887–919 (EHKD…WTYS).

Interacts with MAP1S (via WD repeats). In terms of tissue distribution, enriched in the nervous system (at protein level).

The protein localises to the cytoplasm. The protein resides in the cytoskeleton. The polypeptide is WD repeat-containing protein 47 (Wdr47) (Mus musculus (Mouse)).